Reading from the N-terminus, the 420-residue chain is UDP-N-acetylglucosamine 1-carboxyvinyltransferase (420 aa).

Residue 22–23 (KN) coordinates phosphoenolpyruvate. R94 is a UDP-N-acetyl-alpha-D-glucosamine binding site. Catalysis depends on C118, which acts as the Proton donor. C118 carries the post-translational modification 2-(S-cysteinyl)pyruvic acid O-phosphothioketal. Residues D307 and I329 each contribute to the UDP-N-acetyl-alpha-D-glucosamine site.

It belongs to the EPSP synthase family. MurA subfamily.

The protein localises to the cytoplasm. The catalysed reaction is phosphoenolpyruvate + UDP-N-acetyl-alpha-D-glucosamine = UDP-N-acetyl-3-O-(1-carboxyvinyl)-alpha-D-glucosamine + phosphate. It participates in cell wall biogenesis; peptidoglycan biosynthesis. In terms of biological role, cell wall formation. Adds enolpyruvyl to UDP-N-acetylglucosamine. This is UDP-N-acetylglucosamine 1-carboxyvinyltransferase from Granulibacter bethesdensis (strain ATCC BAA-1260 / CGDNIH1).